A 1017-amino-acid chain; its full sequence is Adhesion G-protein coupled receptor G2 (1017 aa).

An N-terminal signal peptide occupies residues 1–37; sequence MVFSVRQCGHVGRTEEVLLTFKIFLVIICLHVVLVTS. The Extracellular segment spans residues 38-627; sequence LEEDTDNSSL…TSVLPAQMMA (590 aa). Residues Asn-44, Asn-85, Asn-99, Asn-111, Asn-117, Asn-144, Asn-162, Asn-186, and Asn-194 are each glycosylated (N-linked (GlcNAc...) asparagine). The segment at 301–366 is disordered; it reads PLSPQPSAPI…NTTSAPPVQT (66 aa). Positions 308–320 are enriched in low complexity; the sequence is APIASSPAIDMPP. 2 stretches are compositionally biased toward polar residues: residues 321–335 and 344–366; these read QSETISSPMPQTHVS and SFSSPTVSAPANVNTTSAPPVQT. 11 N-linked (GlcNAc...) asparagine glycosylation sites follow: Asn-357, Asn-370, Asn-435, Asn-438, Asn-456, Asn-461, Asn-528, Asn-542, Asn-547, Asn-551, and Asn-597. The GAIN-B domain occupies 462–619; sequence TTTFVAQDPA…GVLLDLSRTS (158 aa). 2 disulfides stabilise this stretch: Cys-570–Cys-601 and Cys-589–Cys-603. Residues 570-619 are GPS; that stretch reads CVFWDLGRNGGRGGWSDNGCSVKDRRLNETICTCSHLTSFGVLLDLSRTS. Positions 608 to 619 are stachel; sequence SFGVLLDLSRTS. A helical membrane pass occupies residues 628 to 648; the sequence is LTFITYIGCGLSSIFLSVTLV. Residues 649-667 lie on the Cytoplasmic side of the membrane; sequence TYIAFEKIRRDYPSKILIQ. A helical transmembrane segment spans residues 668 to 688; that stretch reads LCAALLLLNLVFLLDSWIALY. Residues 689 to 693 lie on the Extracellular side of the membrane; sequence KMQGL. The chain crosses the membrane as a helical span at residues 694–714; it reads CISVAVFLHYFLLVSFTWMGL. A disulfide bridge connects residues Cys-694 and Cys-778. The Cytoplasmic segment spans residues 715–737; sequence EAFHMYLALVKVFNTYIRKYILK. A helical membrane pass occupies residues 738–758; that stretch reads FCIVGWGVPAVVVTIILTISP. Residues 759 to 789 are Extracellular-facing; sequence DNYGLGSYGKFPNGSPDDFCWINNNAVFYIT. A helical membrane pass occupies residues 790-810; sequence VVGYFCVIFLLNVSMFIVVLV. The Cytoplasmic portion of the chain corresponds to 811–834; sequence QLCRIKKKKQLGAQRKTSIQDLRS. The helical transmembrane segment at 835 to 855 threads the bilayer; that stretch reads IAGLTFLLGITWGFAFFAWGP. Topologically, residues 856-857 are extracellular; sequence VN. The N-linked (GlcNAc...) asparagine glycan is linked to Asn-857. Residues 858 to 878 traverse the membrane as a helical segment; that stretch reads VTFMYLFAIFNTLQGFFIFIF. Asn-868 contributes to the 3beta-hydroxyandrost-5-en-17-one binding site. At 879 to 1017 the chain is on the cytoplasmic side; the sequence is YCVAKENVRK…RGSLHFIEQM (139 aa). A disordered region spans residues 918–939; that stretch reads QTVNQGVSSSSNSLQSSSNSTN. Ser-1010 is modified (phosphoserine).

This sequence belongs to the G-protein coupled receptor 2 family. Adhesion G-protein coupled receptor (ADGR) subfamily. In terms of assembly, heterodimer of 2 chains generated by proteolytic processing; the large extracellular N-terminal fragment and the membrane-bound C-terminal fragment predominantly remain associated and non-covalently linked. Interacts with CFTR. Post-translationally, proteolytically cleaved into 2 subunits, an extracellular subunit and a seven-transmembrane subunit. Highly glycosylated. Epididymis-specific expression (at protein level). Both subunits are associated with apical membranes of efferent ductule and proximal epididymal duct epithelia. Mainly expressed in the nonciliated principal cells of the proximal excurrent ducts. Specifically over-expressed in Ewing sarcomas but also up-regulated in a number of carcinomas derived from prostate, kidney or lung.

Its subcellular location is the apical cell membrane. Its activity is regulated as follows. Forms a heterodimer of 2 chains generated by proteolytic processing that remain associated through non-covalent interactions mediated by the GAIN-B domain. In the inactivated receptor, the Stachel sequence (also named stalk) is embedded in the GAIN-B domain, where it adopts a beta-strand conformation. On activation, the Stachel moves into the 7 transmembrane region and adopts a twisted hook-shaped configuration that forms contacts within the receptor, leading to coupling of a G-alpha protein, which activates signaling. The cleaved GAIN-B and N-terminal domains can then dissociate from the rest of the receptor. Deoxycorticosterone (DOC) acts as an antagonist of ADGRG2. Functionally, adhesion G-protein coupled receptor (aGPCR) for steroid hormones, such as dehydroepiandrosterone (DHEA; also named 3beta-hydroxyandrost-5-en-17-one) and androstenedione. Involved in a signal transduction pathway controlling epididymal function and male fertility. Ligand binding causes a conformation change that triggers signaling via guanine nucleotide-binding proteins (G proteins) and modulates the activity of downstream effectors, such as adenylate cyclase. ADGRG2 is coupled to G(s) G proteins and mediates activation of adenylate cyclase activity. Also able to couple with G(q) G proteins in vitro. Together with CFTR, required to promote fluid reabsorption within efferent ductule. This chain is Adhesion G-protein coupled receptor G2, found in Homo sapiens (Human).